Here is a 55-residue protein sequence, read N- to C-terminus: Conotoxin Cal22b (55 aa).

Positions 1–5 (GRPSA) are excised as a propeptide.

Contains 4 disulfide bonds. In terms of tissue distribution, expressed by the venom duct.

Its subcellular location is the secreted. Functionally, probable neurotoxin with unknown target. Possibly targets ion channels. This chain is Conotoxin Cal22b, found in Californiconus californicus (California cone).